The primary structure comprises 449 residues: Interferon-related developmental regulator 1 (449 aa).

Basic residues predominate over residues 1-10 (MPKNKKRNAP). Residues 1 to 41 (MPKNKKRNAPHRGGGGGGGSGAATSAATTGGPHRTVQPFSD) form a disordered region. A compositionally biased stretch (gly residues) spans 12-21 (RGGGGGGGSG). Low complexity predominate over residues 22-31 (AATSAATTGG).

Belongs to the IFRD family. Interacts with PSIP1/LEDGF. In terms of tissue distribution, expressed at high levels in the embryonic brain in the period related to neuroblast proliferation and differentiation.

It localises to the cytoplasm. Its subcellular location is the cell membrane. The protein localises to the nucleus. In terms of biological role, probably participates in neurogenesis. Could play a role in regulating gene activity in the proliferative and/or differentiative pathways induced by NGF. This chain is Interferon-related developmental regulator 1 (Ifrd1), found in Rattus norvegicus (Rat).